A 412-amino-acid polypeptide reads, in one-letter code: Argininosuccinate synthase (412 aa).

ATP-binding positions include A10 to S18 and A36. 2 residues coordinate L-citrulline: Y87 and S92. Y87 is modified (phosphotyrosine). N6-acetyllysine is present on K112. At Y113 the chain carries Phosphotyrosine. S115 to N123 contributes to the ATP binding site. T119, N123, and D124 together coordinate L-aspartate. Residue N123 participates in L-citrulline binding. An L-citrulline-binding site is contributed by R127. An N6-acetyllysine; by CLOCK mark is found at K165 and K176. S177 and S180 each carry phosphoserine. 2 residues coordinate L-citrulline: S180 and S189. T219 is subject to Phosphothreonine. Residues E270 and Y282 each coordinate L-citrulline.

Belongs to the argininosuccinate synthase family. Type 1 subfamily. Homotetramer. Interacts with NMRAL1. Interacts with CLOCK; in a circadian manner. Forms tissue-specific complexes with ASL, SLC7A1, HSP90AA1 and nitric oxide synthase NOS1, NOS2 or NOS3; the complex regulates cell-autonomous L-arginine synthesis and citrulline recycling while channeling extracellular L-arginine to nitric oxide synthesis pathway. In terms of processing, acetylated by CLOCK in a circadian manner which negatively regulates its enzyme activity. Deacetylated by histone deacetylases.

Its subcellular location is the cytoplasm. It is found in the cytosol. The catalysed reaction is L-citrulline + L-aspartate + ATP = 2-(N(omega)-L-arginino)succinate + AMP + diphosphate + H(+). The protein operates within amino-acid biosynthesis; L-arginine biosynthesis; L-arginine from L-ornithine and carbamoyl phosphate: step 2/3. It functions in the pathway nitrogen metabolism; urea cycle; (N(omega)-L-arginino)succinate from L-aspartate and L-citrulline: step 1/1. In terms of biological role, one of the enzymes of the urea cycle, the metabolic pathway transforming neurotoxic amonia produced by protein catabolism into inocuous urea in the liver of ureotelic animals. Catalyzes the formation of arginosuccinate from aspartate, citrulline and ATP and together with ASL it is responsible for the biosynthesis of arginine in most body tissues. Indirectly, may be involved in the control of blood pressure. In Rattus norvegicus (Rat), this protein is Argininosuccinate synthase.